We begin with the raw amino-acid sequence, 236 residues long: Peroxisomal membrane protein 11D (236 aa).

The residue at position 2 (glycine 2) is an N-acetylglycine. At glycine 2–lysine 92 the chain is on the cytoplasmic side. Residues asparagine 93–glycine 109 traverse the membrane as a helical segment. The Lumenal portion of the chain corresponds to arginine 110–threonine 207. The chain crosses the membrane as a helical span at residues proline 208–leucine 227. Over proline 228–proline 236 the chain is Cytoplasmic.

It belongs to the peroxin-11 family. As to quaternary structure, homooligomer. Interacts with ARC5 and FIS1B on peroxisomes. As to expression, expressed in developing siliques.

Its subcellular location is the peroxisome membrane. In terms of biological role, involved in peroxisomal proliferation. Promotes peroxisomal duplication, aggregation or elongation without fission. This chain is Peroxisomal membrane protein 11D (PEX11D), found in Arabidopsis thaliana (Mouse-ear cress).